The chain runs to 401 residues: Argininosuccinate synthase (401 aa).

Residues 7-15 (AYSGGLDTS) and Ala-34 each bind ATP. L-citrulline contacts are provided by Tyr-85 and Ser-90. An ATP-binding site is contributed by Gly-115. 3 residues coordinate L-aspartate: Thr-117, Asn-121, and Asp-122. An L-citrulline-binding site is contributed by Asn-121. L-citrulline-binding residues include Arg-125, Ser-174, Ser-183, Glu-259, and Tyr-271.

Belongs to the argininosuccinate synthase family. Type 1 subfamily. Homotetramer.

The protein localises to the cytoplasm. It catalyses the reaction L-citrulline + L-aspartate + ATP = 2-(N(omega)-L-arginino)succinate + AMP + diphosphate + H(+). It participates in amino-acid biosynthesis; L-arginine biosynthesis; L-arginine from L-ornithine and carbamoyl phosphate: step 2/3. This chain is Argininosuccinate synthase, found in Desulfitobacterium hafniense (strain DSM 10664 / DCB-2).